The chain runs to 245 residues: Type II restriction enzyme EcoRV (245 aa).

Glutamate 45, aspartate 74, and aspartate 90 together coordinate Mg(2+). Active-site residues include aspartate 74, aspartate 90, and lysine 92.

As to quaternary structure, homodimer. Mg(2+) serves as cofactor.

It catalyses the reaction Endonucleolytic cleavage of DNA to give specific double-stranded fragments with terminal 5'-phosphates.. A P subtype restriction enzyme that recognizes the double-stranded sequence 5'-GATATC-3' and cleaves after T-3. The polypeptide is Type II restriction enzyme EcoRV (ecoRVR) (Escherichia coli).